The primary structure comprises 55 residues: Large ribosomal subunit protein bL33 (55 aa).

The protein belongs to the bacterial ribosomal protein bL33 family.

The sequence is that of Large ribosomal subunit protein bL33 from Klebsiella pneumoniae (strain 342).